We begin with the raw amino-acid sequence, 1863 residues long: Calcineurin-binding protein 1 (1863 aa).

3 TPR repeats span residues 30-65, 81-116, and 118-150; these read LSQTYHDGLLKLQAKDYDKARELLESILKDPIITNS, FLALKNLATVFLELGSSHYENALNCYLQAIDLDAKD, and VLWNHLGTLSCSMGLLSISRWAFEQGLLCSPNN. A disordered region spans residues 315–361; the sequence is ERESGGSVKEKEPVFSEEHPQERRSTRLERLRNQKPEKEGLEFDNSK. TPR repeat units lie at residues 543-576, 602-637, 866-900, 955-988, 990-1009, 1011-1031, 1143-1183, 1226-1263, 1264-1297, 1306-1339, 1377-1412, and 1508-1541; these read ARYFWLSARLSILEDNKAKALEEYLRCLSLLGRE, IHEINLLKIDFLLENNIPEMMEKEFYSECVNLLAPL, INSPDGLGHDMGLPDKLCRNEVKSFLEEVHVEKNE, QCFFCLYGLNLRVDGSYEDELAVHKNTSRGDYQT, EQCVDVFQYILPYAKASSRT, LVKLRRVLRAIKKHFSQPPDD, FESW…SQRV, VPFYDQRSVLPSKDATWTRFCENSMKHFNKAFSHRQDW, SHAFYMGKLSEKLGHSYEISLSYYKQAMTLNPSA, ASRLKLLNACGKQNLEALKVLASYCFDESIKDTA, EGVWHMLYNDSLSALGICVEGDLKHFHKARYMLAQG, and NSLRSDKRFSLCVEDLVPVAIGRYVKALVSSMSR. Basic and acidic residues predominate over residues 894-923; it reads VHVEKNENNKTESKKDGSEEQVGYREKEQS. Residues 894–941 are disordered; it reads VHVEKNENNKTESKKDGSEEQVGYREKEQSEQQSKQIPEHTEEVAEEE. The interval 1813–1840 is disordered; the sequence is KMKRGASTSSVVPSVQSGGTSEPEPAPK. Polar residues predominate over residues 1818-1832; the sequence is ASTSSVVPSVQSGGT.

As to quaternary structure, component of the HIRA complex made of UBN1, UBN2, ASF1A, CABIN1 and HIRA. As to expression, expressed at low levels in seedlings.

The protein localises to the nucleus. Functionally, may be required for replication-independent chromatin assembly. This chain is Calcineurin-binding protein 1, found in Arabidopsis thaliana (Mouse-ear cress).